A 379-amino-acid polypeptide reads, in one-letter code: Chaperone protein DnaJ (379 aa).

Positions Asp5–Gly70 constitute a J domain. The CR-type zinc finger occupies Gly139–Gln217. Residues Cys152, Cys155, Cys169, Cys172, Cys191, Cys194, Cys205, and Cys208 each contribute to the Zn(2+) site. CXXCXGXG motif repeat units follow at residues Cys152–Gly159, Cys169–Gly176, Cys191–Gly198, and Cys205–Gly212. The tract at residues Val356–Ser379 is disordered.

It belongs to the DnaJ family. As to quaternary structure, homodimer. The cofactor is Zn(2+).

It is found in the cytoplasm. Its function is as follows. Participates actively in the response to hyperosmotic and heat shock by preventing the aggregation of stress-denatured proteins and by disaggregating proteins, also in an autonomous, DnaK-independent fashion. Unfolded proteins bind initially to DnaJ; upon interaction with the DnaJ-bound protein, DnaK hydrolyzes its bound ATP, resulting in the formation of a stable complex. GrpE releases ADP from DnaK; ATP binding to DnaK triggers the release of the substrate protein, thus completing the reaction cycle. Several rounds of ATP-dependent interactions between DnaJ, DnaK and GrpE are required for fully efficient folding. Also involved, together with DnaK and GrpE, in the DNA replication of plasmids through activation of initiation proteins. This is Chaperone protein DnaJ from Cupriavidus pinatubonensis (strain JMP 134 / LMG 1197) (Cupriavidus necator (strain JMP 134)).